The following is a 484-amino-acid chain: PTS system N-acetylmuramic acid-specific EIIBC component (484 aa).

The 89-residue stretch at 1–89 folds into the PTS EIIB type-1 domain; it reads MAKITSNTVS…NQLIDSLTSG (89 aa). The Phosphocysteine intermediate; for EIIB activity role is filled by C28. A PTS EIIC type-1 domain is found at 125-484; sequence SKFATIFTPL…FFGCKDVDLS (360 aa). 10 consecutive transmembrane segments (helical) span residues 127-147, 168-188, 194-214, 228-248, 266-286, 310-330, 345-365, 379-399, 409-429, and 451-471; these read FATIFTPLIPGFIAAGLLLGF, LIAYMKVFGKGLFAFLSILIG, AFGGSGVNGAILASLFVLGYN, FFGFAIDPRGNIIGVLLAAII, MILTSVITLLIMGAVTFLIIM, AAILAGLFLISVVFGIHQGFV, LFPILAMAGGGQVGASMALYF, GAIIPGLLGIGEPLIYGVTLP, IGGAAGGFFIGLVSYLGLPVG, and IFPGMMVFVAGLLISYIVGFL.

The protein resides in the cell inner membrane. The enzyme catalyses N-acetyl-beta-D-muramate(out) + N(pros)-phospho-L-histidyl-[protein] = N-acetyl-beta-D-muramate 6-phosphate(in) + L-histidyl-[protein]. Its function is as follows. The phosphoenolpyruvate-dependent sugar phosphotransferase system (sugar PTS), a major carbohydrate active transport system, catalyzes the phosphorylation of incoming sugar substrates concomitantly with their translocation across the cell membrane. This system is involved in N-acetylmuramic acid (MurNAc) transport, yielding cytoplasmic MurNAc-6-P. Is also able to take up anhydro-N-acetylmuramic acid (anhMurNAc), but cannot phosphorylate the carbon 6, probably because of the 1,6-anhydro ring. The protein is PTS system N-acetylmuramic acid-specific EIIBC component (murP) of Vibrio parahaemolyticus serotype O3:K6 (strain RIMD 2210633).